Reading from the N-terminus, the 98-residue chain is Cystatin-A (98 aa).

Met-1 bears the N-acetylmethionine mark. The short motif at 46 to 50 (QVVAG) is the Secondary area of contact element.

It belongs to the cystatin family.

It is found in the cytoplasm. Its function is as follows. This is an intracellular thiol proteinase inhibitor. The protein is Cystatin-A (CSTA) of Bos taurus (Bovine).